The following is a 329-amino-acid chain: Ferredoxin--NAD(P)(+) reductase CarAd (329 aa).

Positions 2-92 (YQLKIEGQAP…DLRIKVAVQD (91 aa)) constitute a 2Fe-2S ferredoxin-type domain. Residues Cys-35, Cys-40, Cys-43, and Cys-76 each coordinate [2Fe-2S] cluster. Residues 100-200 (ISRMEAEVVE…TGPMGTSFFR (101 aa)) form the FAD-binding FR-type domain.

In terms of assembly, monomer. Carbazole 1,9a-dioxygenase complex consists of a terminal oxygenase component CarAa, a ferredoxin reductase component CarAd and a ferredoxin component CarAc. [2Fe-2S] cluster is required as a cofactor. The cofactor is FAD.

It carries out the reaction 2 reduced [2Fe-2S]-[ferredoxin] + NAD(+) + H(+) = 2 oxidized [2Fe-2S]-[ferredoxin] + NADH. The enzyme catalyses 2 reduced [2Fe-2S]-[ferredoxin] + NADP(+) + H(+) = 2 oxidized [2Fe-2S]-[ferredoxin] + NADPH. Its function is as follows. Part of the multicomponent carbazole 1,9a-dioxygenase (CARDO), that converts carbazole (CAR) into 2-aminobiphenyl-2,3-diol. It can use both NAD and NADP as electron donors, but NAD is supposed to be the physiological electron donor. The chain is Ferredoxin--NAD(P)(+) reductase CarAd (carAd) from Metapseudomonas resinovorans (Pseudomonas resinovorans).